Reading from the N-terminus, the 227-residue chain is MNLSFFDQFASPQLLGIPLILLSLLFPTLLLPSPNNRWINNRLSTLQLWFLQLITKQLMMPLNKAGHKWALILTSLMTFLLLINLLGLLPYTFTPTTQLSMNMALAFPLWLATLLTGLRNQPSISLGHLLPEGTPTPLIPALILIETTSLLIRPLALGVRLTANLTAGHLLIQLISTATLALLPTMPTISVLTATVLLLLTILELAVAMIQAYVFVLLLSLYLQENI.

Helical transmembrane passes span 14-34, 69-89, 98-118, 139-159, 174-194, and 196-216; these read LLGIPLILLSLLFPTLLLPSP, WALILTSLMTFLLLINLLGLL, QLSMNMALAFPLWLATLLTGL, IPALILIETTSLLIRPLALGV, LISTATLALLPTMPTISVLTA, and VLLLLTILELAVAMIQAYVFV.

The protein belongs to the ATPase A chain family. In terms of assembly, component of the ATP synthase complex composed at least of ATP5F1A/subunit alpha, ATP5F1B/subunit beta, ATP5MC1/subunit c (homooctomer), MT-ATP6/subunit a, MT-ATP8/subunit 8, ATP5ME/subunit e, ATP5MF/subunit f, ATP5MG/subunit g, ATP5MK/subunit k, ATP5MJ/subunit j, ATP5F1C/subunit gamma, ATP5F1D/subunit delta, ATP5F1E/subunit epsilon, ATP5PF/subunit F6, ATP5PB/subunit b, ATP5PD/subunit d, ATP5PO/subunit OSCP. ATP synthase complex consists of a soluble F(1) head domain (subunits alpha(3) and beta(3)) - the catalytic core - and a membrane F(0) domain - the membrane proton channel (subunits c, a, 8, e, f, g, k and j). These two domains are linked by a central stalk (subunits gamma, delta, and epsilon) rotating inside the F1 region and a stationary peripheral stalk (subunits F6, b, d, and OSCP). Interacts with DNAJC30; interaction is direct.

The protein localises to the mitochondrion inner membrane. It catalyses the reaction H(+)(in) = H(+)(out). Subunit a, of the mitochondrial membrane ATP synthase complex (F(1)F(0) ATP synthase or Complex V) that produces ATP from ADP in the presence of a proton gradient across the membrane which is generated by electron transport complexes of the respiratory chain. ATP synthase complex consist of a soluble F(1) head domain - the catalytic core - and a membrane F(1) domain - the membrane proton channel. These two domains are linked by a central stalk rotating inside the F(1) region and a stationary peripheral stalk. During catalysis, ATP synthesis in the catalytic domain of F(1) is coupled via a rotary mechanism of the central stalk subunits to proton translocation. With the subunit c (ATP5MC1), forms the proton-conducting channel in the F(0) domain, that contains two crucial half-channels (inlet and outlet) that facilitate proton movement from the mitochondrial intermembrane space (IMS) into the matrix. Protons are taken up via the inlet half-channel and released through the outlet half-channel, following a Grotthuss mechanism. The sequence is that of ATP synthase F(0) complex subunit a from Struthio camelus (Common ostrich).